We begin with the raw amino-acid sequence, 233 residues long: MKQYFVTGTDTEVGKTYVTCQLLRAANNASLTAIGYKPIAAGCELVNGEWVNEDALNIQQASACANGQTLPINEINPIALTPPIAPHIAANEEGVALTHEKIAEGLNALAAYRPDILLMEGAGGWRLPLTIGSDNTPTHYLSDVVKALKMDVILVVGMRLGCLNHALLTAEAIRADGLIIKGWVANDITGNMTRYQENLRSLKAMLPEPLLAEIPYQTGIEAGTLLSAIEQLS.

12 to 17 provides a ligand contact to ATP; it reads EVGKTY. A Mg(2+)-binding site is contributed by Thr-16. The active site involves Lys-37. Residues Asp-54, 120–123, and 186–187 contribute to the ATP site; these read EGAG and ND. Residues Asp-54 and Glu-120 each coordinate Mg(2+).

The protein belongs to the dethiobiotin synthetase family. In terms of assembly, homodimer. Requires Mg(2+) as cofactor.

It localises to the cytoplasm. It catalyses the reaction (7R,8S)-7,8-diammoniononanoate + CO2 + ATP = (4R,5S)-dethiobiotin + ADP + phosphate + 3 H(+). Its pathway is cofactor biosynthesis; biotin biosynthesis; biotin from 7,8-diaminononanoate: step 1/2. Functionally, catalyzes a mechanistically unusual reaction, the ATP-dependent insertion of CO2 between the N7 and N8 nitrogen atoms of 7,8-diaminopelargonic acid (DAPA, also called 7,8-diammoniononanoate) to form a ureido ring. This chain is ATP-dependent dethiobiotin synthetase BioD, found in Alteromonas mediterranea (strain DSM 17117 / CIP 110805 / LMG 28347 / Deep ecotype).